Consider the following 907-residue polypeptide: Leucine-rich repeat-containing G-protein coupled receptor 5 (907 aa).

The N-terminal stretch at 1-21 is a signal peptide; that stretch reads MDTSSVGVLLSLPVLLQLAAG. Residues 22-553 are Extracellular-facing; that stretch reads GGSPRPGTLL…SPGPFKLCEY (532 aa). The region spanning 33–64 is the LRRNT domain; the sequence is GCPAHCQCEPDGRMLLRVDCSDLGLSELPSNL. 2 disulfide bridges follow: Cys34–Cys40 and Cys38–Cys52. LRR repeat units lie at residues 44 to 64, 65 to 88, 89 to 112, 114 to 136, 137 to 160, 162 to 184, 185 to 208, 209 to 232, 233 to 256, 257 to 279, 281 to 303, 304 to 327, 328 to 350, 351 to 375, 377 to 396, 397 to 420, and 421 to 444; these read GRML…PSNL, SVFT…PLHS, LRFL…AFAG, YSLK…ALQN, LRSL…CFSG, HSLR…AFRS, LSAL…AFGN, LSSL…CFDG, LHSL…VRTL, SNLK…AFVG, PSLI…AFQH, LPEL…LTGT, ASLE…VCDQ, LPNL…VCQK, QKID…TFQQ, LFSL…AFST, and LPSL…GLHG. N-linked (GlcNAc...) asparagine glycans are attached at residues Asn63 and Asn77. Asn208 carries N-linked (GlcNAc...) asparagine glycosylation. Cys348 and Cys373 are oxidised to a cystine. Cys479 and Cys541 are disulfide-bonded. Asn500 carries N-linked (GlcNAc...) asparagine glycosylation. Residues 554–574 form a helical membrane-spanning segment; the sequence is LFGSWLIRIGVWTIAVLALTC. An LRR 18 repeat occupies 564-585; the sequence is VWTIAVLALTCNALVTSTVFRA. At 575-593 the chain is on the cytoplasmic side; the sequence is NALVTSTVFRAAVYISSIK. The helical transmembrane segment at 594 to 614 threads the bilayer; that stretch reads LLIGLIAAVNMLMGVSSAVLA. Topologically, residues 615–638 are extracellular; it reads GVDAFTFGSFAQHGAWWEQAVGCQ. Cysteines 637 and 712 form a disulfide. A helical membrane pass occupies residues 639–659; the sequence is VVGFLSIFASESSVFLLTLAA. Residues 660–682 are Cytoplasmic-facing; that stretch reads LERGWSVKCSAKFETQTPFPSLR. Residues 683–703 form a helical membrane-spanning segment; sequence ATLALCALLAGTVAAVPLLGG. The Extracellular portion of the chain corresponds to 704 to 723; the sequence is SEYSASPLCLPLPFGEPRAT. A helical membrane pass occupies residues 724–744; sequence GYMVALVLLNSLCFLVMTVAY. The Cytoplasmic segment spans residues 745–767; that stretch reads TRLYCHLEKGDLESMWDCSMVKH. A helical transmembrane segment spans residues 768-788; sequence VALLLFTNCILHCPVAFLSFS. The Extracellular segment spans residues 789-802; it reads SLLNLTFISPEVIK. Asn792 carries N-linked (GlcNAc...) asparagine glycosylation. A helical transmembrane segment spans residues 803 to 823; that stretch reads FILLVIVPLPACLNPLLYILF. The Cytoplasmic segment spans residues 824–907; it reads NPHFKEDLGS…LSSVAFVPCL (84 aa).

The protein belongs to the G-protein coupled receptor 1 family. Identified in a complex composed of RNF43, LGR5 and RSPO1. Also interacts with other R-spondin ligands, including RSPO2, RSPO3 and RSPO4.

The protein resides in the cell membrane. Its subcellular location is the golgi apparatus. It is found in the trans-Golgi network membrane. In terms of biological role, receptor for R-spondins that potentiates the canonical Wnt signaling pathway and acts as a stem cell marker of the intestinal epithelium and the hair follicle. Upon binding to R-spondins (RSPO1, RSPO2, RSPO3 or RSPO4), associates with phosphorylated LRP6 and frizzled receptors that are activated by extracellular Wnt receptors, triggering the canonical Wnt signaling pathway to increase expression of target genes. In contrast to classical G-protein coupled receptors, does not activate heterotrimeric G-proteins to transduce the signal. Involved in the development and/or maintenance of the adult intestinal stem cells during postembryonic development. This Bos taurus (Bovine) protein is Leucine-rich repeat-containing G-protein coupled receptor 5 (LGR5).